Reading from the N-terminus, the 254-residue chain is Pimeloyl-[acyl-carrier protein] methyl ester esterase (254 aa).

Substrate contacts are provided by residues Trp20, 80 to 81, and 141 to 145; these read SL and FLALQ. The Nucleophile role is filled by Ser80. Catalysis depends on residues Asp205 and His233. His233 lines the substrate pocket.

The protein belongs to the AB hydrolase superfamily. Carboxylesterase BioH family. Monomer.

It localises to the cytoplasm. It catalyses the reaction 6-carboxyhexanoyl-[ACP] methyl ester + H2O = 6-carboxyhexanoyl-[ACP] + methanol + H(+). It functions in the pathway cofactor biosynthesis; biotin biosynthesis. The physiological role of BioH is to remove the methyl group introduced by BioC when the pimeloyl moiety is complete. It allows to synthesize pimeloyl-ACP via the fatty acid synthetic pathway through the hydrolysis of the ester bonds of pimeloyl-ACP esters. This chain is Pimeloyl-[acyl-carrier protein] methyl ester esterase, found in Methylococcus capsulatus (strain ATCC 33009 / NCIMB 11132 / Bath).